Consider the following 147-residue polypeptide: Hemoglobin subunit beta (147 aa).

The residue at position 2 (Val-2) is an N-acetylvaline. Positions 3-147 (HLSGSEKTAV…VSHALAHKYH (145 aa)) constitute a Globin domain. Thr-13 carries the post-translational modification Phosphothreonine. At Ser-45 the chain carries Phosphoserine. At Lys-60 the chain carries N6-acetyllysine. His-64 serves as a coordination point for heme b. Residue Lys-83 is modified to N6-acetyllysine. Heme b is bound at residue His-93. Position 94 is an S-nitrosocysteine (Cys-94). At Lys-145 the chain carries N6-acetyllysine.

This sequence belongs to the globin family. Heterotetramer of two alpha chains and two beta chains. In terms of tissue distribution, red blood cells.

Involved in oxygen transport from the lung to the various peripheral tissues. The polypeptide is Hemoglobin subunit beta (HBB) (Tachyglossus aculeatus aculeatus (Southeast Australian short-beaked echidna)).